Reading from the N-terminus, the 161-residue chain is Phosphopantetheine adenylyltransferase (161 aa).

Serine 9 contributes to the substrate binding site. ATP contacts are provided by residues 9–10 (SF) and histidine 17. Substrate contacts are provided by lysine 41, threonine 74, and arginine 88. Residues 89-91 (GVR), glutamate 99, and 124-130 (NSFVASS) each bind ATP.

Belongs to the bacterial CoaD family. As to quaternary structure, homohexamer. It depends on Mg(2+) as a cofactor.

It localises to the cytoplasm. The catalysed reaction is (R)-4'-phosphopantetheine + ATP + H(+) = 3'-dephospho-CoA + diphosphate. It functions in the pathway cofactor biosynthesis; coenzyme A biosynthesis; CoA from (R)-pantothenate: step 4/5. Reversibly transfers an adenylyl group from ATP to 4'-phosphopantetheine, yielding dephospho-CoA (dPCoA) and pyrophosphate. In Lactobacillus acidophilus (strain ATCC 700396 / NCK56 / N2 / NCFM), this protein is Phosphopantetheine adenylyltransferase.